A 311-amino-acid chain; its full sequence is Methionyl-tRNA formyltransferase (311 aa).

Ser117–Pro120 provides a ligand contact to (6S)-5,6,7,8-tetrahydrofolate.

It belongs to the Fmt family.

It carries out the reaction L-methionyl-tRNA(fMet) + (6R)-10-formyltetrahydrofolate = N-formyl-L-methionyl-tRNA(fMet) + (6S)-5,6,7,8-tetrahydrofolate + H(+). Attaches a formyl group to the free amino group of methionyl-tRNA(fMet). The formyl group appears to play a dual role in the initiator identity of N-formylmethionyl-tRNA by promoting its recognition by IF2 and preventing the misappropriation of this tRNA by the elongation apparatus. The chain is Methionyl-tRNA formyltransferase from Bordetella avium (strain 197N).